Consider the following 408-residue polypeptide: Protein SLX4IP (408 aa).

Residues lysine 61 and lysine 79 each participate in a glycyl lysine isopeptide (Lys-Gly) (interchain with G-Cter in SUMO2) cross-link. Serine 130 bears the Phosphoserine mark. Residues lysine 167 and lysine 176 each participate in a glycyl lysine isopeptide (Lys-Gly) (interchain with G-Cter in SUMO2) cross-link. The disordered stretch occupies residues 173 to 226 (TETKSSVTSKSQTRRDTVETSSDSVIAEIARRRNDGQASSSPPSESMGQAKDSI). A compositionally biased stretch (polar residues) spans 208 to 219 (GQASSSPPSESM). The residue at position 213 (serine 213) is a Phosphoserine. Glycyl lysine isopeptide (Lys-Gly) (interchain with G-Cter in SUMO2) cross-links involve residues lysine 239 and lysine 242. Polar residues predominate over residues 243–255 (VNQTQPEDTSGQQ). Residues 243–313 (VNQTQPEDTS…DFDHHGRVSL (71 aa)) form a disordered region. Residues lysine 256, lysine 291, lysine 347, lysine 356, and lysine 372 each participate in a glycyl lysine isopeptide (Lys-Gly) (interchain with G-Cter in SUMO2) cross-link. Positions 365 to 408 (LSSRHLMKNNPGQAQQTGLATNTERLSTIQNSPTKKRKKYERGH) are disordered. Over residues 374–397 (NPGQAQQTGLATNTERLSTIQNSP) the composition is skewed to polar residues. At threonine 392 the chain carries Phosphothreonine. Over residues 398-408 (TKKRKKYERGH) the composition is skewed to basic residues. Residue lysine 399 forms a Glycyl lysine isopeptide (Lys-Gly) (interchain with G-Cter in SUMO2) linkage.

This sequence belongs to the SLX4IP family. In terms of assembly, interacts with SLX4/BTBD12; subunit of different structure-specific endonucleases.

This Homo sapiens (Human) protein is Protein SLX4IP (SLX4IP).